Reading from the N-terminus, the 186-residue chain is Small ribosomal subunit protein uS5 (186 aa).

Residues 20–83 enclose the S5 DRBM domain; sequence FVDKLVHINR…EAAKRDMIFV (64 aa).

Belongs to the universal ribosomal protein uS5 family. As to quaternary structure, part of the 30S ribosomal subunit. Contacts proteins S4 and S8.

In terms of biological role, with S4 and S12 plays an important role in translational accuracy. Functionally, located at the back of the 30S subunit body where it stabilizes the conformation of the head with respect to the body. The sequence is that of Small ribosomal subunit protein uS5 from Brucella anthropi (strain ATCC 49188 / DSM 6882 / CCUG 24695 / JCM 21032 / LMG 3331 / NBRC 15819 / NCTC 12168 / Alc 37) (Ochrobactrum anthropi).